The following is a 146-amino-acid chain: Hemoglobin subunit beta (146 aa).

V1 carries the post-translational modification N-acetylvaline. The Globin domain occupies 2 to 146; the sequence is HLTDAEKNLV…VANALAHKYH (145 aa). H63 contributes to the heme b binding site. Position 82 is an N6-acetyllysine (K82). H92 is a heme b binding site. Residue C93 is modified to S-nitrosocysteine. An N6-acetyllysine modification is found at K144.

This sequence belongs to the globin family. As to quaternary structure, heterotetramer of two alpha chains and two beta chains. In terms of tissue distribution, red blood cells.

Its function is as follows. Involved in oxygen transport from the lung to the various peripheral tissues. The sequence is that of Hemoglobin subunit beta (HBB) from Mesocricetus brandti (Brandt's hamster).